A 129-amino-acid chain; its full sequence is Phosphomevalonate dehydratase small subunit (129 aa).

The active-site Proton acceptor is the serine 61.

The protein belongs to the AcnX type II small subunit family. Heterodimer composed of a large subunit (PMDh-L) and a small subunit (PMDh-S).

The enzyme catalyses (R)-5-phosphomevalonate = (2E)-3-methyl-5-phosphooxypent-2-enoate + H2O. Its pathway is isoprenoid biosynthesis; isopentenyl diphosphate biosynthesis via mevalonate pathway. Its function is as follows. Component of a hydro-lyase that catalyzes the dehydration of mevalonate 5-phosphate (MVA5P) to form trans-anhydromevalonate 5-phosphate (tAHMP). Involved in the archaeal mevalonate (MVA) pathway, which provides fundamental precursors for isoprenoid biosynthesis, such as isopentenyl diphosphate (IPP) and dimethylallyl diphosphate (DMAPP). This is Phosphomevalonate dehydratase small subunit from Methanocaldococcus jannaschii (strain ATCC 43067 / DSM 2661 / JAL-1 / JCM 10045 / NBRC 100440) (Methanococcus jannaschii).